A 566-amino-acid polypeptide reads, in one-letter code: Glucose-6-phosphate isomerase, cytosolic (566 aa).

Catalysis depends on Glu360, which acts as the Proton donor. Active-site residues include His391 and Lys516.

It belongs to the GPI family. In terms of assembly, homodimer.

The protein resides in the cytoplasm. The catalysed reaction is alpha-D-glucose 6-phosphate = beta-D-fructose 6-phosphate. It participates in carbohydrate degradation; glycolysis; D-glyceraldehyde 3-phosphate and glycerone phosphate from D-glucose: step 2/4. The protein is Glucose-6-phosphate isomerase, cytosolic (PGIC) of Spinacia oleracea (Spinach).